A 496-amino-acid chain; its full sequence is Sporulation-killing factor biosynthesis protein SkfC (496 aa).

The next 7 helical transmembrane spans lie at 1-21, 224-244, 248-268, 291-311, 331-351, 399-419, and 443-463; these read MNSL…LLFI, VSGM…LVFM, TSII…SLTL, LLGI…VFIC, IVQI…TSLL, LLMI…IIVS, and FIFG…CVLV.

The protein localises to the membrane. Its function is as follows. Required for production of the bacteriocin SkfA. This Bacillus subtilis (strain 168) protein is Sporulation-killing factor biosynthesis protein SkfC.